We begin with the raw amino-acid sequence, 339 residues long: UDP-N-acetylglucosamine--N-acetylmuramyl-(pentapeptide) pyrophosphoryl-undecaprenol N-acetylglucosamine transferase (339 aa).

Residues 9–11 (TGG), Asn119, Arg160, Ser188, and Gln280 each bind UDP-N-acetyl-alpha-D-glucosamine.

The protein belongs to the glycosyltransferase 28 family. MurG subfamily.

Its subcellular location is the cell inner membrane. It catalyses the reaction di-trans,octa-cis-undecaprenyl diphospho-N-acetyl-alpha-D-muramoyl-L-alanyl-D-glutamyl-meso-2,6-diaminopimeloyl-D-alanyl-D-alanine + UDP-N-acetyl-alpha-D-glucosamine = di-trans,octa-cis-undecaprenyl diphospho-[N-acetyl-alpha-D-glucosaminyl-(1-&gt;4)]-N-acetyl-alpha-D-muramoyl-L-alanyl-D-glutamyl-meso-2,6-diaminopimeloyl-D-alanyl-D-alanine + UDP + H(+). The protein operates within cell wall biogenesis; peptidoglycan biosynthesis. Its function is as follows. Cell wall formation. Catalyzes the transfer of a GlcNAc subunit on undecaprenyl-pyrophosphoryl-MurNAc-pentapeptide (lipid intermediate I) to form undecaprenyl-pyrophosphoryl-MurNAc-(pentapeptide)GlcNAc (lipid intermediate II). The chain is UDP-N-acetylglucosamine--N-acetylmuramyl-(pentapeptide) pyrophosphoryl-undecaprenol N-acetylglucosamine transferase from Thermus thermophilus (strain ATCC BAA-163 / DSM 7039 / HB27).